The sequence spans 1955 residues: Rootletin (1955 aa).

5 coiled-coil regions span residues 29–58, 162–223, 284–1303, 1368–1579, and 1607–1863; these read EENR…ESIE, EENL…QQHT, LMRK…AVES, VGVT…EELR, and RRWE…RTKG. Disordered stretches follow at residues 321–341, 391–451, 504–551, 907–935, and 961–998; these read VTEN…DLKR, LTTK…KKLD, LKER…RSLK, EKLN…NEAV, and RDLE…QKTL. Basic and acidic residues-rich tracts occupy residues 326–341 and 396–451; these read MKSE…DLKR and GEID…KKLD. Composition is skewed to basic and acidic residues over residues 907-931, 961-982, and 989-998; these read EKLN…ESSK, RDLE…KMEL, and EDRKKEQKTL.

Belongs to the rootletin family. Expressed in head ciliated neurons.

The protein localises to the cytoplasm. Its subcellular location is the cytoskeleton. It localises to the cilium basal body. The protein resides in the cilium axoneme. Major structural component of the ciliary rootlet, a cytoskeletal-like structure in ciliated cells which originates from the basal body at the proximal end of a cilium and extends proximally toward the cell nucleus. Required for cilia integrity and function in sensory neurons. Maintains cilia integrity, partly by modulating the assembly and transport of intraflagellar proteins along the ciliary axoneme. Required for normal mating behavior and normal responses to environmental and chemical stimuli. The protein is Rootletin of Caenorhabditis elegans.